A 154-amino-acid polypeptide reads, in one-letter code: Myoglobin (154 aa).

The region spanning Gly-2–Lys-148 is the Globin domain. His-65 is a binding site for nitrite. His-65 provides a ligand contact to O2. Heme b is bound at residue His-94.

This sequence belongs to the globin family. Monomeric.

The protein resides in the cytoplasm. Its subcellular location is the sarcoplasm. It carries out the reaction Fe(III)-heme b-[protein] + nitric oxide + H2O = Fe(II)-heme b-[protein] + nitrite + 2 H(+). The enzyme catalyses H2O2 + AH2 = A + 2 H2O. Functionally, monomeric heme protein which primary function is to store oxygen and facilitate its diffusion within muscle tissues. Reversibly binds oxygen through a pentacoordinated heme iron and enables its timely and efficient release as needed during periods of heightened demand. Depending on the oxidative conditions of tissues and cells, and in addition to its ability to bind oxygen, it also has a nitrite reductase activity whereby it regulates the production of bioactive nitric oxide. Under stress conditions, like hypoxia and anoxia, it also protects cells against reactive oxygen species thanks to its pseudoperoxidase activity. This is Myoglobin (MB) from Varanus varius (Lace monitor lizard).